A 487-amino-acid chain; its full sequence is Probable glutamate receptor (487 aa).

Residues 1–23 (MDKGQHFVFFVLTTVLLLRESSH) form the signal peptide. Residues 24-169 (AGAMRNDAAA…FFHFLAPFSK (146 aa)) are Extracellular-facing. N-linked (GlcNAc...) asparagine glycosylation is present at N104. Residues 170 to 190 (ETWTGLLFAYILTCFCLFLVA) traverse the membrane as a helical segment. Residues 191–235 (RLSPCEWNEPKNEENHFTFLNSLWFGAGALALQGVTPRPKALSVR) are Cytoplasmic-facing. A helical membrane pass occupies residues 236–256 (VIAAIWWLFTIALLAAYIANF). Over 257–419 (TALLSSGSEQ…ERWSPLQPQA (163 aa)) the chain is Extracellular. A helical transmembrane segment spans residues 420–440 (LGGLFLTLAIGLALGVIAAVV). Topologically, residues 441-487 (ELSNKSRHAAGHVKKSCCSIFTEEMCTRLRIKENTRQSQETSGRANA) are cytoplasmic.

The protein belongs to the glutamate-gated ion channel (TC 1.A.10.1) family.

It is found in the cell membrane. It localises to the postsynaptic cell membrane. Its function is as follows. Receptor for glutamate. L-glutamate acts as an excitatory neurotransmitter at many synapses in the central nervous system. The postsynaptic actions of Glu are mediated by a variety of receptors that are named according to their selective agonists. This Anas platyrhynchos (Mallard) protein is Probable glutamate receptor (KBP).